Consider the following 61-residue polypeptide: UPF0434 protein PSPA7_2181 (61 aa).

It belongs to the UPF0434 family.

The polypeptide is UPF0434 protein PSPA7_2181 (Pseudomonas paraeruginosa (strain DSM 24068 / PA7) (Pseudomonas aeruginosa (strain PA7))).